The following is a 383-amino-acid chain: Micronemal protein 3 (383 aa).

The first 26 residues, 1–26 (MRGGTSALLHALTFSGAVWMCTPAEA), serve as a signal peptide directing secretion. The propeptide at 27–66 (LPIQKSVQLGSFDKVVPSREVVSESLAPSFAVTETHSSVQ) is required for proper sorting to micronemes. A lectin-like; required for the binding of host cells region spans residues 67–145 (SPSKQETQLC…HPDKSYGGDC (79 aa)). Required for proper sorting to micronemes stretches follow at residues 146 to 189 (SCEK…SEDP), 190 to 236 (CSKR…KRTG), and 237 to 290 (CHAF…LAEK). Positions 186–227 (SEDPCSKRGNAKCGPNGTCIVVDSVSYTCTCGDGETLVNLPE) constitute an EGF-like domain. 2 cysteine pairs are disulfide-bonded: C190-C204 and C198-C214. A glycan (N-linked (GlcNAc...) asparagine) is linked at N201. Positions 294–359 (EFGISASSCK…HTVTCEKIKH (66 aa)) are involved in dimerization.

As to quaternary structure, homodimer; dimerization is likely required for host cell binding but not for trafficking to micronemes. Post-translationally, removal of the propeptide occurs in a post-medial-Golgi compartment. Removal of the propeptide is required for the host cell binding. The presence of propeptide does not affect dimerization. The presence of propeptide does not affect sorting to micronemes.

The protein resides in the cytoplasmic vesicle. Its subcellular location is the secretory vesicle. The protein localises to the microneme. It is found in the secreted. It localises to the golgi apparatus. The protein resides in the endoplasmic reticulum. Its function is as follows. Adhesin; can bind both the host cells and the parasites. May be involved in parasite invasion by acting as a bridge between the parasite and the host cell. Triggers innate immune responses in mouse macrophages via the TLR11/MyD88/NF-kappa-B pathway. Induces TNF/TNF-alpha secretion in mouse macrophages. Induces secretion of IL6 in mouse and human macrophages likely via different mechanisms. Up-regulates expression of NOS2/iNOS in mouse macrophages. Induces mouse macrophage polarization. The chain is Micronemal protein 3 from Toxoplasma gondii.